Consider the following 98-residue polypeptide: Large ribosomal subunit protein uL23 (98 aa).

Belongs to the universal ribosomal protein uL23 family. As to quaternary structure, part of the 50S ribosomal subunit. Contacts protein L29, and trigger factor when it is bound to the ribosome.

Functionally, one of the early assembly proteins it binds 23S rRNA. One of the proteins that surrounds the polypeptide exit tunnel on the outside of the ribosome. Forms the main docking site for trigger factor binding to the ribosome. The chain is Large ribosomal subunit protein uL23 from Rickettsia akari (strain Hartford).